The following is a 217-amino-acid chain: Phosphoribosylformylglycinamidine synthase subunit PurQ (217 aa).

Residues 2-217 (SIGVLVFPGS…GRVLLQGLLS (216 aa)) form the Glutamine amidotransferase type-1 domain. Cys86 (nucleophile) is an active-site residue. Catalysis depends on residues His194 and Glu196.

Part of the FGAM synthase complex composed of 1 PurL, 1 PurQ and 2 PurS subunits.

Its subcellular location is the cytoplasm. The enzyme catalyses N(2)-formyl-N(1)-(5-phospho-beta-D-ribosyl)glycinamide + L-glutamine + ATP + H2O = 2-formamido-N(1)-(5-O-phospho-beta-D-ribosyl)acetamidine + L-glutamate + ADP + phosphate + H(+). It carries out the reaction L-glutamine + H2O = L-glutamate + NH4(+). The protein operates within purine metabolism; IMP biosynthesis via de novo pathway; 5-amino-1-(5-phospho-D-ribosyl)imidazole from N(2)-formyl-N(1)-(5-phospho-D-ribosyl)glycinamide: step 1/2. Functionally, part of the phosphoribosylformylglycinamidine synthase complex involved in the purines biosynthetic pathway. Catalyzes the ATP-dependent conversion of formylglycinamide ribonucleotide (FGAR) and glutamine to yield formylglycinamidine ribonucleotide (FGAM) and glutamate. The FGAM synthase complex is composed of three subunits. PurQ produces an ammonia molecule by converting glutamine to glutamate. PurL transfers the ammonia molecule to FGAR to form FGAM in an ATP-dependent manner. PurS interacts with PurQ and PurL and is thought to assist in the transfer of the ammonia molecule from PurQ to PurL. The polypeptide is Phosphoribosylformylglycinamidine synthase subunit PurQ (Parasynechococcus marenigrum (strain WH8102)).